The following is a 76-amino-acid chain: Protein MATERNALLY EXPRESSED GENE 4 (76 aa).

The signal sequence occupies residues 1-27 (MEYRKRVDALVFFSLLLLGYFAAHAHG). The cysteines at positions 53 and 75 are disulfide-linked.

The protein belongs to the MEG family. As to expression, expressed exclusively in endosperm.

The polypeptide is Protein MATERNALLY EXPRESSED GENE 4 (MEG4) (Zea mays (Maize)).